The following is a 358-amino-acid chain: Probable tartrate dehydrogenase/decarboxylase TtuC' (358 aa).

Residues D222, D246, and D250 each coordinate Mn(2+).

It belongs to the isocitrate and isopropylmalate dehydrogenases family. The cofactor is Mg(2+). Requires Mn(2+) as cofactor. It depends on K(+) as a cofactor.

Its subcellular location is the cytoplasm. It carries out the reaction tartrate + NAD(+) = 2-hydroxy-3-oxosuccinate + NADH + H(+). It catalyses the reaction (2R,3S)-tartrate + NAD(+) = 2-hydroxy-3-oxosuccinate + NADH + H(+). The enzyme catalyses (2R,3R)-tartrate + NAD(+) = 2-hydroxy-3-oxosuccinate + NADH + H(+). The catalysed reaction is (2R,3R)-tartrate + H(+) = (R)-glycerate + CO2. It carries out the reaction (R)-malate + NAD(+) = pyruvate + CO2 + NADH. Its pathway is carbohydrate acid metabolism; tartrate degradation; 2-hydroxy-3-oxosuccinate from L-tartrate: step 1/1. It participates in carbohydrate acid metabolism; tartrate degradation; 2-hydroxy-3-oxosuccinate from meso-tartrate: step 1/1. The protein operates within carbohydrate acid metabolism; tartrate degradation; D-glycerate from L-tartrate: step 1/1. In terms of biological role, has multiple catalytic activities. Apart from catalyzing the oxidation of (+)-tartrate to oxaloglycolate, also converts meso-tartrate to D-glycerate and catalyzes the oxidative decarboxylation of D-malate to pyruvate. The protein is Probable tartrate dehydrogenase/decarboxylase TtuC' (ttuC') of Agrobacterium vitis (Rhizobium vitis).